The primary structure comprises 122 residues: Acyl carrier protein 1, mitochondrial (122 aa).

A mitochondrion-targeting transit peptide spans 1–34 (MALRNAILRHLRVPVQTLGLNQSKIGFLGTIRSF). One can recognise a Carrier domain in the interval 44–119 (EAVVDRVLDV…LAIEYVYNHP (76 aa)). S79 is subject to O-(pantetheine 4'-phosphoryl)serine.

Belongs to the acyl carrier protein (ACP) family. Complex I is composed of at least 49 different subunits. 4'-phosphopantetheine is transferred from CoA to a specific serine of the apo-ACP-like protein.

Its subcellular location is the mitochondrion. It participates in lipid metabolism; fatty acid biosynthesis. Functionally, carrier of the growing fatty acid chain in fatty acid biosynthesis. May be involved in the synthesis of short and medium chain fatty acids. Accessory and non-catalytic subunit of the mitochondrial membrane respiratory chain NADH dehydrogenase (Complex I), which functions in the transfer of electrons from NADH to the respiratory chain. The sequence is that of Acyl carrier protein 1, mitochondrial (MTACP1) from Arabidopsis thaliana (Mouse-ear cress).